Reading from the N-terminus, the 263-residue chain is Phosphate import ATP-binding protein PstB (263 aa).

One can recognise an ABC transporter domain in the interval Ile17–Ile258. Gly49–Ser56 is a binding site for ATP.

Belongs to the ABC transporter superfamily. Phosphate importer (TC 3.A.1.7) family. In terms of assembly, the complex is composed of two ATP-binding proteins (PstB), two transmembrane proteins (PstC and PstA) and a solute-binding protein (PstS).

The protein resides in the cell inner membrane. It catalyses the reaction phosphate(out) + ATP + H2O = ADP + 2 phosphate(in) + H(+). Its function is as follows. Part of the ABC transporter complex PstSACB involved in phosphate import. Responsible for energy coupling to the transport system. The sequence is that of Phosphate import ATP-binding protein PstB from Ralstonia nicotianae (strain ATCC BAA-1114 / GMI1000) (Ralstonia solanacearum).